The primary structure comprises 361 residues: Phospho-N-acetylmuramoyl-pentapeptide-transferase (361 aa).

A run of 10 helical transmembrane segments spans residues 27–47 (ILASLTALIVGLLCGPLMIRW), 70–90 (GTPTMGGVLILLAITVSCLLW), 97–117 (SLWLVLLVTLANGLVGWVDDY), 134–154 (YFWQSVIALVAVSYLYWNASL), 167–187 (TVTWDLGIFFPVLAYFVIVGS), 199–219 (GLAIMPIVMVAGALGVFAYAS), 236–256 (TGELTIFCSSIVGAGLGFLWY), 263–283 (VFMGDVGSLALGAALGIVAVV), 288–308 (LVLLIMGGLFVIETLSVILQV), and 338–358 (KVIVRFWIITVVFVLCGLATL).

It belongs to the glycosyltransferase 4 family. MraY subfamily. Requires Mg(2+) as cofactor.

It localises to the cell inner membrane. It catalyses the reaction UDP-N-acetyl-alpha-D-muramoyl-L-alanyl-gamma-D-glutamyl-meso-2,6-diaminopimeloyl-D-alanyl-D-alanine + di-trans,octa-cis-undecaprenyl phosphate = di-trans,octa-cis-undecaprenyl diphospho-N-acetyl-alpha-D-muramoyl-L-alanyl-D-glutamyl-meso-2,6-diaminopimeloyl-D-alanyl-D-alanine + UMP. It participates in cell wall biogenesis; peptidoglycan biosynthesis. Functionally, catalyzes the initial step of the lipid cycle reactions in the biosynthesis of the cell wall peptidoglycan: transfers peptidoglycan precursor phospho-MurNAc-pentapeptide from UDP-MurNAc-pentapeptide onto the lipid carrier undecaprenyl phosphate, yielding undecaprenyl-pyrophosphoryl-MurNAc-pentapeptide, known as lipid I. This is Phospho-N-acetylmuramoyl-pentapeptide-transferase from Legionella pneumophila (strain Lens).